The primary structure comprises 61 residues: MPIVTVKFLEGRSDEQKRALVERVTEAVAETIQANPEKIHVVLEEMRKDHYGVAGKRISDQ.

Residue proline 2 is the Proton acceptor; via imino nitrogen of the active site.

The protein belongs to the 4-oxalocrotonate tautomerase family.

In Halalkalibacterium halodurans (strain ATCC BAA-125 / DSM 18197 / FERM 7344 / JCM 9153 / C-125) (Bacillus halodurans), this protein is Probable tautomerase BH3814.